A 296-amino-acid chain; its full sequence is Protease HtpX homolog (296 aa).

Helical transmembrane passes span 14-34 (VVLL…VGYL) and 39-59 (YQFG…SMIF). Histidine 143 is a binding site for Zn(2+). Glutamate 144 is a catalytic residue. Position 147 (histidine 147) interacts with Zn(2+). 2 helical membrane passes run 158–178 (IAVA…RMLF) and 195–215 (ILVL…ASLV). Residue glutamate 224 coordinates Zn(2+).

It belongs to the peptidase M48B family. Requires Zn(2+) as cofactor.

Its subcellular location is the cell membrane. This is Protease HtpX homolog from Streptococcus agalactiae serotype Ia (strain ATCC 27591 / A909 / CDC SS700).